Here is a 120-residue protein sequence, read N- to C-terminus: NAD(P)H-quinone oxidoreductase subunit 3, chloroplastic (120 aa).

The next 3 membrane-spanning stretches (helical) occupy residues 9 to 29 (IFWA…LISG), 64 to 84 (MFAL…PWAM), and 88 to 108 (VLGV…IVGS).

Belongs to the complex I subunit 3 family. In terms of assembly, NDH is composed of at least 16 different subunits, 5 of which are encoded in the nucleus.

The protein resides in the plastid. It localises to the chloroplast thylakoid membrane. The enzyme catalyses a plastoquinone + NADH + (n+1) H(+)(in) = a plastoquinol + NAD(+) + n H(+)(out). It carries out the reaction a plastoquinone + NADPH + (n+1) H(+)(in) = a plastoquinol + NADP(+) + n H(+)(out). Functionally, NDH shuttles electrons from NAD(P)H:plastoquinone, via FMN and iron-sulfur (Fe-S) centers, to quinones in the photosynthetic chain and possibly in a chloroplast respiratory chain. The immediate electron acceptor for the enzyme in this species is believed to be plastoquinone. Couples the redox reaction to proton translocation, and thus conserves the redox energy in a proton gradient. In Glycine max (Soybean), this protein is NAD(P)H-quinone oxidoreductase subunit 3, chloroplastic.